A 550-amino-acid polypeptide reads, in one-letter code: Chaperonin GroEL (550 aa).

Residues 30–33 (TLGP), Lys-51, 87–91 (DGTTT), Gly-415, 479–481 (NAA), and Asp-495 each bind ATP.

This sequence belongs to the chaperonin (HSP60) family. In terms of assembly, forms a cylinder of 14 subunits composed of two heptameric rings stacked back-to-back. Interacts with the co-chaperonin GroES.

The protein localises to the cytoplasm. The enzyme catalyses ATP + H2O + a folded polypeptide = ADP + phosphate + an unfolded polypeptide.. Functionally, together with its co-chaperonin GroES, plays an essential role in assisting protein folding. The GroEL-GroES system forms a nano-cage that allows encapsulation of the non-native substrate proteins and provides a physical environment optimized to promote and accelerate protein folding. The polypeptide is Chaperonin GroEL (Marinobacter nauticus (strain ATCC 700491 / DSM 11845 / VT8) (Marinobacter aquaeolei)).